The primary structure comprises 254 residues: uncharacterized protein (254 aa).

Positions 18, 37, 63, 90, 159, 163, 192, and 194 each coordinate NADP(+). The active-site Proton donor is the Tyr159. The Lowers pKa of active site Tyr role is filled by Lys163.

The protein belongs to the short-chain dehydrogenases/reductases (SDR) family.

The protein localises to the cytoplasm. It is found in the nucleus. This is an uncharacterized protein from Schizosaccharomyces pombe (strain 972 / ATCC 24843) (Fission yeast).